A 226-amino-acid polypeptide reads, in one-letter code: B-cell antigen receptor complex-associated protein alpha chain (226 aa).

The first 32 residues, 1–32 (MPGGPGVLQALPATIFLLFLLSAVYLGPGCQA), serve as a signal peptide directing secretion. An Ig-like C2-type domain is found at 33–116 (LWMHKVPASL…RVQEGNESYQ (84 aa)). The Extracellular segment spans residues 33 to 143 (LWMHKVPASL…LDMGEGTKNR (111 aa)). A disulfide bridge links Cys54 with Cys106. N-linked (GlcNAc...) asparagine glycosylation is found at Asn57, Asn63, Asn73, Asn88, Asn97, and Asn112. The helical transmembrane segment at 144-165 (IITAEGIILLFCAVVPGTLLLF) threads the bilayer. Residues 166–226 (RKRWQNEKLG…NIGDVQLEKP (61 aa)) are Cytoplasmic-facing. The ITAM domain occupies 177–205 (DAGDEYEDENLYEGLNLDDCSMYEDISRG). Phosphotyrosine; by SRC-type Tyr-kinases is present on residues Tyr188 and Tyr199. Asymmetric dimethylarginine; by PRMT1 is present on Arg204. Position 210 is a phosphotyrosine; by Tyr-kinases (Tyr210).

Heterodimer of alpha and beta chains; disulfide-linked. Part of the B-cell antigen receptor complex where the alpha/beta chain heterodimer is non-covalently associated with an antigen-specific membrane-bound surface immunoglobulin of two heavy chains and two light chains. Interacts through its phosphorylated ITAM domain with the SH2 domains of SYK which stimulates SYK autophosphorylation and activation. Also interacts, when phosphorylated on Tyr-210, with the SH2 domain of BLNK/SLP65, bringing BLNK into proximity with SYK and allowing SYK to phosphorylate BLNK which is necessary for trafficking of the BCR to late endosomes. Interacts with Src-family tyrosine kinases including FYN and LYN, increasing their activity. Phosphorylated on tyrosine, serine and threonine residues upon B-cell activation. Phosphorylation of tyrosine residues by Src-family kinases is an early and essential feature of the BCR signaling cascade. The phosphorylated tyrosines serve as docking sites for SH2-domain containing kinases, leading to their activation which in turn leads to phosphorylation of downstream targets. Phosphorylated by LYN. Phosphorylation of serine and threonine residues may prevent subsequent tyrosine phosphorylation. In terms of processing, arginine methylation in the ITAM domain may interfere with the binding of SYK. It promotes signals leading to B-cell differentiation. In terms of tissue distribution, B-cells.

It is found in the cell membrane. Functionally, required in cooperation with CD79B for initiation of the signal transduction cascade activated by binding of antigen to the B-cell antigen receptor complex (BCR) which leads to internalization of the complex, trafficking to late endosomes and antigen presentation. Also required for BCR surface expression and for efficient differentiation of pro- and pre-B-cells. Stimulates SYK autophosphorylation and activation. Binds to BLNK, bringing BLNK into proximity with SYK and allowing SYK to phosphorylate BLNK. Also interacts with and increases activity of some Src-family tyrosine kinases. Represses BCR signaling during development of immature B-cells. In Homo sapiens (Human), this protein is B-cell antigen receptor complex-associated protein alpha chain (CD79A).